Consider the following 55-residue polypeptide: Large ribosomal subunit protein bL33 (55 aa).

It belongs to the bacterial ribosomal protein bL33 family.

The polypeptide is Large ribosomal subunit protein bL33 (Xanthobacter autotrophicus (strain ATCC BAA-1158 / Py2)).